A 698-amino-acid chain; its full sequence is Long-chain-fatty-acid--CoA ligase 1 (698 aa).

Position 1 is an N-acetylmethionine (Met1). The residue at position 9 (Tyr9) is a 3'-nitrotyrosine. Tyr84 carries the phosphotyrosine modification. Residue Ser135 is glycosylated (O-linked (GlcNAc) serine). N6-acetyllysine is present on residues Lys356 and Lys386. Position 620 is a phosphoserine (Ser620). Lys632 carries the N6-acetyllysine modification.

This sequence belongs to the ATP-dependent AMP-binding enzyme family. Mg(2+) is required as a cofactor.

Its subcellular location is the microsome membrane. The protein resides in the mitochondrion outer membrane. The protein localises to the peroxisome membrane. It localises to the endoplasmic reticulum membrane. It catalyses the reaction a long-chain fatty acid + ATP + CoA = a long-chain fatty acyl-CoA + AMP + diphosphate. The enzyme catalyses (5Z,8Z,11Z,14Z)-eicosatetraenoate + ATP + CoA = (5Z,8Z,11Z,14Z)-eicosatetraenoyl-CoA + AMP + diphosphate. The catalysed reaction is 3,7,11,15-tetramethylhexadecanoate + ATP + CoA = phytanoyl-CoA + AMP + diphosphate. It carries out the reaction hexadecanoate + ATP + CoA = hexadecanoyl-CoA + AMP + diphosphate. It catalyses the reaction (E)-hexadec-2-enoate + ATP + CoA = (2E)-hexadecenoyl-CoA + AMP + diphosphate. The enzyme catalyses 2,6,10,14-tetramethylpentadecanoate + ATP + CoA = pristanoyl-CoA + AMP + diphosphate. The catalysed reaction is 14,15-epoxy-(5Z,8Z,11Z)-eicosatrienoate + ATP + CoA = 14,15-epoxy-(5Z,8Z,11Z)-eicosatrienoyl-CoA + AMP + diphosphate. It carries out the reaction 5-hydroxy-(6E,8Z,11Z,14Z)-eicosatetraenoate + ATP + CoA = 5-hydroxy-(6E,8Z,11Z,14Z)-eicosatetraenoyl-CoA + AMP + diphosphate. It catalyses the reaction 12-hydroxy-(5Z,8Z,10E,14Z)-eicosatetraenoate + ATP + CoA = 12-hydroxy-(5Z,8Z,10E,14Z)-eicosatetraenoyl-CoA + AMP + diphosphate. The enzyme catalyses 15-hydroxy-(5Z,8Z,11Z,13E)-eicosatetraenoate + ATP + CoA = 15-hydroxy-(5Z,8Z,11Z,13E)-eicosatetraenoyl-CoA + AMP + diphosphate. The catalysed reaction is (9Z)-octadecenoate + ATP + CoA = (9Z)-octadecenoyl-CoA + AMP + diphosphate. Its activity is regulated as follows. Inhibited at high temperature and by arachidonate. Catalyzes the conversion of long-chain fatty acids to their active form acyl-CoAs for both synthesis of cellular lipids, and degradation via beta-oxidation. Preferentially uses palmitoleate, oleate and linoleate. Preferentially activates arachidonate than epoxyeicosatrienoic acids (EETs) or hydroxyeicosatrienoic acids (HETEs). The sequence is that of Long-chain-fatty-acid--CoA ligase 1 from Cavia porcellus (Guinea pig).